Reading from the N-terminus, the 302-residue chain is tRNA pseudouridine synthase B (302 aa).

The active-site Nucleophile is the Asp38.

This sequence belongs to the pseudouridine synthase TruB family. Type 1 subfamily.

It carries out the reaction uridine(55) in tRNA = pseudouridine(55) in tRNA. In terms of biological role, responsible for synthesis of pseudouridine from uracil-55 in the psi GC loop of transfer RNAs. The chain is tRNA pseudouridine synthase B from Geobacillus thermodenitrificans (strain NG80-2).